A 97-amino-acid chain; its full sequence is MDITDIRIKKVESKNSGSKLLAYVAVTFDNCLVLHNIRVIKGQKGVFIAMPNRRTRVGEYKDIVHPISQDFRKTLQTSIFKEYIRENPADLELELDF.

The protein belongs to the SpoVG family.

In terms of biological role, could be involved in septation. In Borrelia garinii subsp. bavariensis (strain ATCC BAA-2496 / DSM 23469 / PBi) (Borreliella bavariensis), this protein is Putative septation protein SpoVG.